A 106-amino-acid chain; its full sequence is Small ribosomal subunit protein uS10 (106 aa).

Belongs to the universal ribosomal protein uS10 family. In terms of assembly, part of the 30S ribosomal subunit.

Involved in the binding of tRNA to the ribosomes. This chain is Small ribosomal subunit protein uS10, found in Synechococcus sp. (strain CC9605).